The primary structure comprises 854 residues: DNA mismatch repair protein MutS (854 aa).

Positions 1–21 (MTASDIQPTEPHTPPTPHADT) are disordered. ATP is bound at residue 658–665 (GPNASGKS).

The protein belongs to the DNA mismatch repair MutS family.

Functionally, this protein is involved in the repair of mismatches in DNA. It is possible that it carries out the mismatch recognition step. This protein has a weak ATPase activity. In Trichormus variabilis (strain ATCC 29413 / PCC 7937) (Anabaena variabilis), this protein is DNA mismatch repair protein MutS.